Here is a 185-residue protein sequence, read N- to C-terminus: Ribosome-recycling factor (185 aa).

The protein belongs to the RRF family.

It localises to the cytoplasm. Functionally, responsible for the release of ribosomes from messenger RNA at the termination of protein biosynthesis. May increase the efficiency of translation by recycling ribosomes from one round of translation to another. In Desulfatibacillum aliphaticivorans, this protein is Ribosome-recycling factor.